Reading from the N-terminus, the 214-residue chain is Pyridoxine/pyridoxamine 5'-phosphate oxidase (214 aa).

Substrate contacts are provided by residues Arg-9–Tyr-12 and Lys-67. Residues Arg-62 to Lys-67, Phe-77 to Thr-78, Arg-83, Lys-84, and Gln-106 each bind FMN. 3 residues coordinate substrate: Tyr-124, Arg-128, and Ser-132. FMN-binding positions include Gln-141–Ser-142 and Trp-186. Arg-192–His-194 provides a ligand contact to substrate. Arg-196 lines the FMN pocket.

It belongs to the pyridoxamine 5'-phosphate oxidase family. As to quaternary structure, homodimer. It depends on FMN as a cofactor.

The enzyme catalyses pyridoxamine 5'-phosphate + O2 + H2O = pyridoxal 5'-phosphate + H2O2 + NH4(+). It catalyses the reaction pyridoxine 5'-phosphate + O2 = pyridoxal 5'-phosphate + H2O2. Its pathway is cofactor metabolism; pyridoxal 5'-phosphate salvage; pyridoxal 5'-phosphate from pyridoxamine 5'-phosphate: step 1/1. It functions in the pathway cofactor metabolism; pyridoxal 5'-phosphate salvage; pyridoxal 5'-phosphate from pyridoxine 5'-phosphate: step 1/1. Functionally, catalyzes the oxidation of either pyridoxine 5'-phosphate (PNP) or pyridoxamine 5'-phosphate (PMP) into pyridoxal 5'-phosphate (PLP). The polypeptide is Pyridoxine/pyridoxamine 5'-phosphate oxidase (Nostoc punctiforme (strain ATCC 29133 / PCC 73102)).